We begin with the raw amino-acid sequence, 1071 residues long: ATP-dependent helicase/deoxyribonuclease subunit B (1071 aa).

The protein belongs to the helicase family. AddB/RexB type 2 subfamily. As to quaternary structure, heterodimer of AddA and RexB. It depends on Mg(2+) as a cofactor.

In terms of biological role, the heterodimer acts as both an ATP-dependent DNA helicase and an ATP-dependent, dual-direction single-stranded exonuclease. Recognizes the chi site generating a DNA molecule suitable for the initiation of homologous recombination. This subunit has 5' -&gt; 3' nuclease activity but not helicase activity. This chain is ATP-dependent helicase/deoxyribonuclease subunit B, found in Streptococcus pyogenes serotype M28 (strain MGAS6180).